A 1040-amino-acid polypeptide reads, in one-letter code: Contactin-2 (1040 aa).

A signal peptide spans 1–30; that stretch reads MGTHARKKASLLLLVLATVALVSSPGWSFA. Ig-like C2-type domains follow at residues 39–130, 135–224, 241–324, 329–413, 419–506, and 511–605; these read PIFE…AVLR, QEFS…SVFS, PSIK…GRII, PEWL…AELA, PDFR…GILS, and TKIT…ATVL. 4 disulfides stabilise this stretch: Cys-63–Cys-113, Cys-157–Cys-209, Cys-263–Cys-308, and Cys-350–Cys-397. N-linked (GlcNAc...) asparagine glycans are attached at residues Asn-78, Asn-200, and Asn-206. Residues Asn-463, Asn-479, Asn-500, and Asn-527 are each glycosylated (N-linked (GlcNAc...) asparagine). Fibronectin type-III domains follow at residues 612-710, 715-812, 817-913, and 917-1008; these read PPGG…TKEA, APSG…SAEE, APAK…VKPP, and PPGN…NGGT. Asn-777 carries an N-linked (GlcNAc...) asparagine glycan. A Cell attachment site motif is present at residues 796–798; it reads RGD. 3 N-linked (GlcNAc...) asparagine glycosylation sites follow: Asn-832, Asn-920, and Asn-942. The tract at residues 895-921 is disordered; sequence RAGTGPASPSADAMTVKPPPRRPPGNI. Ala-1015 carries the GPI-anchor amidated alanine lipid modification. A propeptide spans 1016-1040 (removed in mature form); that stretch reads AARPAHPGPAFSCMVILMLAGYQKL.

This sequence belongs to the immunoglobulin superfamily. Contactin family. In neural tissues in embryos, and in adult brain, spinal cord and cerebellum.

Its subcellular location is the cell membrane. Its function is as follows. May play a role in the initial growth and guidance of axons. May be involved in cell adhesion. In conjunction with another transmembrane protein, CNTNAP2, contributes to the organization of axonal domains at nodes of Ranvier by maintaining voltage-gated potassium channels at the juxtaparanodal region. The sequence is that of Contactin-2 (Cntn2) from Rattus norvegicus (Rat).